Reading from the N-terminus, the 110-residue chain is Small ribosomal subunit protein uS17 (110 aa).

This sequence belongs to the universal ribosomal protein uS17 family. Part of the 30S ribosomal subunit.

In terms of biological role, one of the primary rRNA binding proteins, it binds specifically to the 5'-end of 16S ribosomal RNA. The sequence is that of Small ribosomal subunit protein uS17 from Petrotoga mobilis (strain DSM 10674 / SJ95).